The chain runs to 411 residues: Na(+)-translocating NADH-quinone reductase subunit F (411 aa).

A helical membrane pass occupies residues 5–25 (VILALGIAAFTVIVLVLVAII). A 2Fe-2S ferredoxin-type domain is found at 36–130 (GDITIDINDD…NMEVELPEEI (95 aa)). Residues Cys-73, Cys-79, Cys-82, and Cys-114 each contribute to the [2Fe-2S] cluster site. The region spanning 133–273 (VKKWECTVIS…SGPFGEFFAK (141 aa)) is the FAD-binding FR-type domain.

The protein belongs to the NqrF family. Composed of six subunits; NqrA, NqrB, NqrC, NqrD, NqrE and NqrF. [2Fe-2S] cluster is required as a cofactor. Requires FAD as cofactor.

It is found in the cell inner membrane. The enzyme catalyses a ubiquinone + n Na(+)(in) + NADH + H(+) = a ubiquinol + n Na(+)(out) + NAD(+). Functionally, NQR complex catalyzes the reduction of ubiquinone-1 to ubiquinol by two successive reactions, coupled with the transport of Na(+) ions from the cytoplasm to the periplasm. The first step is catalyzed by NqrF, which accepts electrons from NADH and reduces ubiquinone-1 to ubisemiquinone by a one-electron transfer pathway. In Haemophilus influenzae (strain 86-028NP), this protein is Na(+)-translocating NADH-quinone reductase subunit F.